The sequence spans 122 residues: MSRRSPKLELKLNLSPPTSSQRRMVRSPSRSATTSPTSPPSSCVSSEMNQDEPSVRYSTSPETTSMVLVGCPRCLMYVMLSEDDPKCPKCKSTVLLDFLHENATNANANAAAASSGRKTRRN.

The segment covering 1–10 (MSRRSPKLEL) has biased composition (basic and acidic residues). The segment at 1-62 (MSRRSPKLEL…PSVRYSTSPE (62 aa)) is disordered. Positions 7-12 (KLELKL) match the EAR motif. The span at 27–46 (SPSRSATTSPTSPPSSCVSS) shows a compositional bias: low complexity. The segment covering 47–62 (EMNQDEPSVRYSTSPE) has biased composition (polar residues).

Interacts with GL2. Interacts with TPL. In terms of tissue distribution, expressed in root and shoot meristems.

Its subcellular location is the nucleus. Acts as a negative regulator of root hair development redundantly with GIR2. GIR1 and GIR2 may function as adapter proteins that associate with GL2 and participate in the control of root hair formation. GIR1 and GIR2 may function as adapter proteins that associate with TPL and participate in the repression of root gene expression. This chain is Protein GL2-INTERACTING REPRESSOR 1, found in Arabidopsis thaliana (Mouse-ear cress).